The primary structure comprises 354 residues: Uroporphyrinogen decarboxylase (354 aa).

Residues 27–31 (RQAGR), Asp77, Tyr154, Thr209, and His327 each bind substrate.

The protein belongs to the uroporphyrinogen decarboxylase family. As to quaternary structure, homodimer.

It is found in the cytoplasm. It carries out the reaction uroporphyrinogen III + 4 H(+) = coproporphyrinogen III + 4 CO2. It functions in the pathway porphyrin-containing compound metabolism; protoporphyrin-IX biosynthesis; coproporphyrinogen-III from 5-aminolevulinate: step 4/4. Its function is as follows. Catalyzes the decarboxylation of four acetate groups of uroporphyrinogen-III to yield coproporphyrinogen-III. In Salmonella paratyphi B (strain ATCC BAA-1250 / SPB7), this protein is Uroporphyrinogen decarboxylase.